The primary structure comprises 353 residues: Phospho-N-acetylmuramoyl-pentapeptide-transferase (353 aa).

Helical transmembrane passes span 24–44, 66–86, 88–108, 129–149, 160–180, 192–212, 229–249, 256–276, 281–301, and 330–350; these read LGFFIAFFLTLFLMPKFILWA, TPTMGGIVFVFATIVASVLCA, LGNLYVLLGMIVLVGFSFVGF, FGMLFVLSLVVSVLLSLKGLD, PLFEMPTILAVGFWVLVFLST, GLASVPSIFTLLSLSIFVYVA, VGELFVISLALVGSLFGFLWY, VFMGDSGSLALGGFIAYNAIV, ILLVLMGLIFVVETLSVILQV, and KVIVRFWIISMLSNLVALLSL.

Belongs to the glycosyltransferase 4 family. MraY subfamily. Mg(2+) is required as a cofactor.

It localises to the cell inner membrane. It catalyses the reaction UDP-N-acetyl-alpha-D-muramoyl-L-alanyl-gamma-D-glutamyl-meso-2,6-diaminopimeloyl-D-alanyl-D-alanine + di-trans,octa-cis-undecaprenyl phosphate = di-trans,octa-cis-undecaprenyl diphospho-N-acetyl-alpha-D-muramoyl-L-alanyl-D-glutamyl-meso-2,6-diaminopimeloyl-D-alanyl-D-alanine + UMP. Its pathway is cell wall biogenesis; peptidoglycan biosynthesis. Its function is as follows. Catalyzes the initial step of the lipid cycle reactions in the biosynthesis of the cell wall peptidoglycan: transfers peptidoglycan precursor phospho-MurNAc-pentapeptide from UDP-MurNAc-pentapeptide onto the lipid carrier undecaprenyl phosphate, yielding undecaprenyl-pyrophosphoryl-MurNAc-pentapeptide, known as lipid I. The chain is Phospho-N-acetylmuramoyl-pentapeptide-transferase from Helicobacter pylori (strain Shi470).